The primary structure comprises 57 residues: Potassium channel toxin KTx1 (57 aa).

The first 13 residues, 1–13 (FLVLLLVSLMCYA), serve as a signal peptide directing secretion. A propeptide spanning residues 14-18 (EIAEG) is cleaved from the precursor. 3 disulfides stabilise this stretch: Cys-24/Cys-37, Cys-30/Cys-42, and Cys-36/Cys-51.

This sequence belongs to the scorpion calcin-like family. KTX subfamily. Expressed by the venom gland.

It is found in the secreted. In terms of biological role, this recombinant peptide inhibits voltage-gated potassium channels mKv1.3/KCNA3 (IC(50)=1.70 uM), mKv1.1/KCNA1 (10 uM inhibits 40% of currents) and hKv1.2/KCNA2 (10 uM inhibits 42% of currents). May also increase intracellular calcium release through the activation of nuclear inositol 1,4,5-trisphosphate receptors (ITPR) of cardiomyocytes, thereby causing an increase in the contraction frequency of these cells. This Isometrus maculatus (Lesser brown scorpion) protein is Potassium channel toxin KTx1.